The primary structure comprises 392 residues: Probable tRNA sulfurtransferase (392 aa).

The region spanning 60–162 (QQVINDLQQV…HDCAIVYGHK (103 aa)) is the THUMP domain. Residues 180 to 181 (LL), 205 to 206 (TF), R264, G286, and Q295 each bind ATP.

Belongs to the ThiI family.

The protein localises to the cytoplasm. The enzyme catalyses [ThiI sulfur-carrier protein]-S-sulfanyl-L-cysteine + a uridine in tRNA + 2 reduced [2Fe-2S]-[ferredoxin] + ATP + H(+) = [ThiI sulfur-carrier protein]-L-cysteine + a 4-thiouridine in tRNA + 2 oxidized [2Fe-2S]-[ferredoxin] + AMP + diphosphate. It carries out the reaction [ThiS sulfur-carrier protein]-C-terminal Gly-Gly-AMP + S-sulfanyl-L-cysteinyl-[cysteine desulfurase] + AH2 = [ThiS sulfur-carrier protein]-C-terminal-Gly-aminoethanethioate + L-cysteinyl-[cysteine desulfurase] + A + AMP + 2 H(+). It functions in the pathway cofactor biosynthesis; thiamine diphosphate biosynthesis. Functionally, catalyzes the ATP-dependent transfer of a sulfur to tRNA to produce 4-thiouridine in position 8 of tRNAs, which functions as a near-UV photosensor. Also catalyzes the transfer of sulfur to the sulfur carrier protein ThiS, forming ThiS-thiocarboxylate. This is a step in the synthesis of thiazole, in the thiamine biosynthesis pathway. The sulfur is donated as persulfide by IscS. In Ureaplasma urealyticum serovar 10 (strain ATCC 33699 / Western), this protein is Probable tRNA sulfurtransferase.